Reading from the N-terminus, the 389-residue chain is Migration and invasion-inhibitory protein (389 aa).

Low complexity predominate over residues 44–54 (LDYSSSSNNLE). Disordered regions lie at residues 44-80 (LDYS…WDPL) and 131-150 (KRPV…AQVP). Positions 58 to 70 (SQETSASSVAPNS) are enriched in polar residues. Residues 71–80 (QDKRHVWDPL) show a composition bias toward basic and acidic residues. Ser-309 is subject to Phosphoserine.

As to quaternary structure, interacts with IGFBP2.

Functionally, inhibits glioma cells invasion and down-regulates adhesion- and motility-associated genes such as NFKB2 and ICAM1. Exhibits opposing effects to IGFBP2 on cell invasion. The sequence is that of Migration and invasion-inhibitory protein (Miip) from Rattus norvegicus (Rat).